A 248-amino-acid polypeptide reads, in one-letter code: Probable transcriptional regulatory protein BOV_1660 (248 aa).

Belongs to the TACO1 family.

The protein localises to the cytoplasm. In Brucella ovis (strain ATCC 25840 / 63/290 / NCTC 10512), this protein is Probable transcriptional regulatory protein BOV_1660.